A 569-amino-acid polypeptide reads, in one-letter code: MEQLRPFFLLLAIFVASLVNAEVHFHEFVIQETPVKRLCRVHNSITVNGQFPGPTLEVRNGDSLVITAINKARYNISLHWHGIRQMRNPWADGPEYITQCPIQPGGSYTYRFTMEDQEGTLWWHAHSRWLRATVYGALIIRPPLSSPHYPFPVIPKREITLLLGEWWDRNPMDVLNLAQFTGAAPNISDAFTINGQPGDLYRCSSQETLRFLVGSGEIVLLRVINSALNQELFFGVANHKLTVVAADASYTKPFSTNVIMLGPGQTTDVLLTADQPPAHYYMAAHAYNSANAAFDNTTTTAILKYKDASCVTLQAKSQARAIPAQLPGFNDTATAAAFTAQMKSPSKVKVPLEIDENLFFTVGLGLFNCPTPNTQRCQGPNGTRFTASINNVSFVFPKQNSIMQAYYQGTPTGVFTTDFPPTPPVTFDYTGNVSRGLWQPTRGTKAYKLKFNSQVQIILQDTSIVTTENHPMHLHGYEFYVVGTGVGNFNPNTDTSSFNLIDPPRRNTIGTPPGGWVAIRFVANNPGAWLMHCHIDSHIFWGLAMVFLVENGEGHLQSVQSPPLDLPQC.

Residues 1 to 21 (MEQLRPFFLLLAIFVASLVNA) form the signal peptide. Plastocyanin-like domains follow at residues 29–145 (VIQE…PPLS) and 157–308 (REIT…YKDA). Asn75 carries N-linked (GlcNAc...) asparagine glycosylation. The Cu cation site is built by His79, His81, His124, and His126. Asn186, Asn296, Asn330, Asn381, Asn391, and Asn432 each carry an N-linked (GlcNAc...) asparagine glycan. One can recognise a Plastocyanin-like 3 domain in the interval 418–553 (DFPPTPPVTF…AMVFLVENGE (136 aa)). Residues His470, His473, His475, His532, Cys533, His534, and His538 each coordinate Cu cation.

It belongs to the multicopper oxidase family. Cu cation serves as cofactor. As to expression, mostly expressed in roots. Also detected in leaves, stems and flowers but not in siliques.

The protein localises to the secreted. Its subcellular location is the extracellular space. It localises to the apoplast. The catalysed reaction is 4 hydroquinone + O2 = 4 benzosemiquinone + 2 H2O. Its function is as follows. Lignin degradation and detoxification of lignin-derived products. In Arabidopsis thaliana (Mouse-ear cress), this protein is Laccase-13 (LAC13).